The primary structure comprises 616 residues: Chaperone protein HtpG (616 aa).

Residues methionine 1–arginine 333 are a; substrate-binding. The tract at residues glutamate 334–lysine 542 is b. Positions isoleucine 543–leucine 616 are c.

This sequence belongs to the heat shock protein 90 family. As to quaternary structure, homodimer.

Its subcellular location is the cytoplasm. Molecular chaperone. Has ATPase activity. This Borreliella afzelii (strain PKo) (Borrelia afzelii) protein is Chaperone protein HtpG.